Reading from the N-terminus, the 346-residue chain is Glycerol-1-phosphate dehydrogenase [NAD(P)+] (346 aa).

NAD(+) contacts are provided by residues 93-97 (GSIID) and 115-118 (TTAS). Asp120 is a substrate binding site. Residue Ser124 participates in NAD(+) binding. Residue Asp167 coordinates substrate. Zn(2+) is bound by residues Asp167 and His247. A substrate-binding site is contributed by His251. A Zn(2+)-binding site is contributed by His263.

Belongs to the glycerol-1-phosphate dehydrogenase family. Requires Zn(2+) as cofactor.

It localises to the cytoplasm. The catalysed reaction is sn-glycerol 1-phosphate + NAD(+) = dihydroxyacetone phosphate + NADH + H(+). It carries out the reaction sn-glycerol 1-phosphate + NADP(+) = dihydroxyacetone phosphate + NADPH + H(+). Its pathway is membrane lipid metabolism; glycerophospholipid metabolism. Its function is as follows. Catalyzes the NAD(P)H-dependent reduction of dihydroxyacetonephosphate (DHAP or glycerone phosphate) to glycerol 1-phosphate (G1P). The G1P thus generated is used as the glycerophosphate backbone of phospholipids in the cellular membranes of Archaea. This is Glycerol-1-phosphate dehydrogenase [NAD(P)+] from Pyrococcus horikoshii (strain ATCC 700860 / DSM 12428 / JCM 9974 / NBRC 100139 / OT-3).